A 376-amino-acid polypeptide reads, in one-letter code: Hydroxylysine kinase (376 aa).

Asp-229 functions as the Proton acceptor in the catalytic mechanism.

The protein belongs to the aminoglycoside phosphotransferase family.

Its subcellular location is the cytoplasm. The catalysed reaction is (5R)-5-hydroxy-L-lysine + GTP = (5R)-5-phosphooxy-L-lysine + GDP + H(+). Functionally, catalyzes the GTP-dependent phosphorylation of 5-hydroxy-L-lysine. This chain is Hydroxylysine kinase (HYKK), found in Bos taurus (Bovine).